The chain runs to 264 residues: Chanoclavine-I dehydrogenase easD (264 aa).

An N-terminal signal peptide occupies residues methionine 1–alanine 20. 6 residues coordinate NADP(+): isoleucine 18, aspartate 66, arginine 132, tyrosine 169, lysine 173, and threonine 204. Tyrosine 169 functions as the Proton donor in the catalytic mechanism. Lysine 173 acts as the Lowers pKa of active site Tyr in catalysis.

This sequence belongs to the short-chain dehydrogenases/reductases (SDR) family. As to quaternary structure, homotetramer.

It carries out the reaction chanoclavine-I + NAD(+) = chanoclavine-I aldehyde + NADH + H(+). It functions in the pathway alkaloid biosynthesis; ergot alkaloid biosynthesis. Chanoclavine-I dehydrogenase; part of the gene cluster that mediates the biosynthesis of fungal ergot alkaloid. DmaW catalyzes the first step of ergot alkaloid biosynthesis by condensing dimethylallyl diphosphate (DMAP) and tryptophan to form 4-dimethylallyl-L-tryptophan. The second step is catalyzed by the methyltransferase easF that methylates 4-dimethylallyl-L-tryptophan in the presence of S-adenosyl-L-methionine, resulting in the formation of 4-dimethylallyl-L-abrine. The catalase easC and the FAD-dependent oxidoreductase easE then transform 4-dimethylallyl-L-abrine to chanoclavine-I which is further oxidized by easD in the presence of NAD(+), resulting in the formation of chanoclavine-I aldehyde. Chanoclavine-I aldehyde is the precursor of ergoamides and ergopeptines in Clavicipitaceae, and clavine-type alcaloids such as fumiclavine in Trichocomaceae. However, the metabolites downstream of chanoclavine-I aldehyde in Arthrodermataceae have not been identified yet. This chain is Chanoclavine-I dehydrogenase easD, found in Arthroderma otae (strain ATCC MYA-4605 / CBS 113480) (Microsporum canis).